Reading from the N-terminus, the 314-residue chain is Ribosomal RNA small subunit methyltransferase H (314 aa).

S-adenosyl-L-methionine is bound by residues 34 to 36 (GGH), Asp-53, Phe-82, Asp-103, and Gln-110.

This sequence belongs to the methyltransferase superfamily. RsmH family.

The protein resides in the cytoplasm. It carries out the reaction cytidine(1402) in 16S rRNA + S-adenosyl-L-methionine = N(4)-methylcytidine(1402) in 16S rRNA + S-adenosyl-L-homocysteine + H(+). In terms of biological role, specifically methylates the N4 position of cytidine in position 1402 (C1402) of 16S rRNA. The polypeptide is Ribosomal RNA small subunit methyltransferase H (Levilactobacillus brevis (strain ATCC 367 / BCRC 12310 / CIP 105137 / JCM 1170 / LMG 11437 / NCIMB 947 / NCTC 947) (Lactobacillus brevis)).